A 355-amino-acid polypeptide reads, in one-letter code: UDP-N-acetylglucosamine--N-acetylmuramyl-(pentapeptide) pyrophosphoryl-undecaprenol N-acetylglucosamine transferase (355 aa).

UDP-N-acetyl-alpha-D-glucosamine-binding positions include 11-13 (TGG), Asn-123, Arg-162, Ser-185, Ile-239, 258-263 (ALTVSE), and Gln-284.

This sequence belongs to the glycosyltransferase 28 family. MurG subfamily.

Its subcellular location is the cell inner membrane. It catalyses the reaction di-trans,octa-cis-undecaprenyl diphospho-N-acetyl-alpha-D-muramoyl-L-alanyl-D-glutamyl-meso-2,6-diaminopimeloyl-D-alanyl-D-alanine + UDP-N-acetyl-alpha-D-glucosamine = di-trans,octa-cis-undecaprenyl diphospho-[N-acetyl-alpha-D-glucosaminyl-(1-&gt;4)]-N-acetyl-alpha-D-muramoyl-L-alanyl-D-glutamyl-meso-2,6-diaminopimeloyl-D-alanyl-D-alanine + UDP + H(+). It participates in cell wall biogenesis; peptidoglycan biosynthesis. Its function is as follows. Cell wall formation. Catalyzes the transfer of a GlcNAc subunit on undecaprenyl-pyrophosphoryl-MurNAc-pentapeptide (lipid intermediate I) to form undecaprenyl-pyrophosphoryl-MurNAc-(pentapeptide)GlcNAc (lipid intermediate II). The polypeptide is UDP-N-acetylglucosamine--N-acetylmuramyl-(pentapeptide) pyrophosphoryl-undecaprenol N-acetylglucosamine transferase (Hydrogenovibrio crunogenus (strain DSM 25203 / XCL-2) (Thiomicrospira crunogena)).